Reading from the N-terminus, the 164-residue chain is Cyclic pyranopterin monophosphate synthase (164 aa).

Residues Met75 to His77 and Met116 to Glu117 contribute to the substrate site. Asp131 is a catalytic residue.

It belongs to the MoaC family. In terms of assembly, homohexamer; trimer of dimers.

The catalysed reaction is (8S)-3',8-cyclo-7,8-dihydroguanosine 5'-triphosphate = cyclic pyranopterin phosphate + diphosphate. It functions in the pathway cofactor biosynthesis; molybdopterin biosynthesis. Its function is as follows. Catalyzes the conversion of (8S)-3',8-cyclo-7,8-dihydroguanosine 5'-triphosphate to cyclic pyranopterin monophosphate (cPMP). The chain is Cyclic pyranopterin monophosphate synthase from Staphylococcus aureus (strain bovine RF122 / ET3-1).